Consider the following 209-residue polypeptide: 3-demethoxyubiquinol 3-hydroxylase (209 aa).

E58, E88, H91, E140, E172, and H175 together coordinate Fe cation.

Belongs to the COQ7 family. Fe cation serves as cofactor.

It is found in the cell membrane. It catalyses the reaction a 5-methoxy-2-methyl-3-(all-trans-polyprenyl)benzene-1,4-diol + AH2 + O2 = a 3-demethylubiquinol + A + H2O. Its pathway is cofactor biosynthesis; ubiquinone biosynthesis. In terms of biological role, catalyzes the hydroxylation of 2-nonaprenyl-3-methyl-6-methoxy-1,4-benzoquinol during ubiquinone biosynthesis. The chain is 3-demethoxyubiquinol 3-hydroxylase from Polaromonas naphthalenivorans (strain CJ2).